The sequence spans 93 residues: Integration host factor subunit beta (93 aa).

Belongs to the bacterial histone-like protein family. Heterodimer of an alpha and a beta chain.

Its function is as follows. This protein is one of the two subunits of integration host factor, a specific DNA-binding protein that functions in genetic recombination as well as in transcriptional and translational control. The polypeptide is Integration host factor subunit beta (Haemophilus ducreyi (strain 35000HP / ATCC 700724)).